Consider the following 269-residue polypeptide: Diphthine synthase (269 aa).

Residues Leu-10, Asp-87, Val-90, 115 to 116 (SI), Leu-166, Ala-209, and His-234 each bind S-adenosyl-L-methionine.

The protein belongs to the diphthine synthase family. As to quaternary structure, homodimer.

The enzyme catalyses 2-[(3S)-amino-3-carboxypropyl]-L-histidyl-[translation elongation factor 2] + 3 S-adenosyl-L-methionine = diphthine-[translation elongation factor 2] + 3 S-adenosyl-L-homocysteine + 3 H(+). Its pathway is protein modification; peptidyl-diphthamide biosynthesis. S-adenosyl-L-methionine-dependent methyltransferase that catalyzes the trimethylation of the amino group of the modified target histidine residue in translation elongation factor 2 (EF-2), to form an intermediate called diphthine. The three successive methylation reactions represent the second step of diphthamide biosynthesis. The sequence is that of Diphthine synthase from Pyrococcus furiosus (strain ATCC 43587 / DSM 3638 / JCM 8422 / Vc1).